We begin with the raw amino-acid sequence, 72 residues long: Large ribosomal subunit protein bL31c (72 aa).

This sequence belongs to the bacterial ribosomal protein bL31 family. Type A subfamily. As to quaternary structure, part of the 50S ribosomal subunit.

The protein localises to the plastid. The protein resides in the chloroplast. Binds the 23S rRNA. This Phaeodactylum tricornutum (strain CCAP 1055/1) protein is Large ribosomal subunit protein bL31c (rpl31).